The chain runs to 154 residues: Transcriptional repressor NrdR (154 aa).

Residues C3 to C34 fold into a zinc finger. The ATP-cone domain maps to P49–E139.

This sequence belongs to the NrdR family. Zn(2+) serves as cofactor.

Its function is as follows. Negatively regulates transcription of bacterial ribonucleotide reductase nrd genes and operons by binding to NrdR-boxes. This Cupriavidus pinatubonensis (strain JMP 134 / LMG 1197) (Cupriavidus necator (strain JMP 134)) protein is Transcriptional repressor NrdR.